A 348-amino-acid polypeptide reads, in one-letter code: Dihydroorotase (348 aa).

Zn(2+) is bound by residues His14 and His16. Substrate-binding positions include 16 to 18 and Asn42; that span reads HLR. 3 residues coordinate Zn(2+): Lys100, His137, and His175. Residue Lys100 is modified to N6-carboxylysine. His137 is a substrate binding site. Position 220 (Leu220) interacts with substrate. Asp248 is a binding site for Zn(2+). Asp248 is a catalytic residue. Substrate contacts are provided by His252 and Ala264.

The protein belongs to the metallo-dependent hydrolases superfamily. DHOase family. Class II DHOase subfamily. As to quaternary structure, homodimer. Requires Zn(2+) as cofactor.

It carries out the reaction (S)-dihydroorotate + H2O = N-carbamoyl-L-aspartate + H(+). Its pathway is pyrimidine metabolism; UMP biosynthesis via de novo pathway; (S)-dihydroorotate from bicarbonate: step 3/3. Functionally, catalyzes the reversible cyclization of carbamoyl aspartate to dihydroorotate. This chain is Dihydroorotase, found in Pseudomonas aeruginosa (strain LESB58).